The sequence spans 179 residues: Inner membrane-spanning protein YciB (179 aa).

Helical transmembrane passes span 22–42 (IYAA…YSWV), 50–70 (MALI…FFHN), 76–96 (WKVT…QWVM), 121–141 (LAWA…AFWL), and 149–169 (FKVF…GIYI).

Belongs to the YciB family.

The protein localises to the cell inner membrane. Functionally, plays a role in cell envelope biogenesis, maintenance of cell envelope integrity and membrane homeostasis. In Shigella dysenteriae serotype 1 (strain Sd197), this protein is Inner membrane-spanning protein YciB.